Reading from the N-terminus, the 164-residue chain is UPF0478 protein SSP1024 (164 aa).

The chain crosses the membrane as a helical span at residues 7–27 (IAGIIAAVAFLILVIGIVVVL). The segment at 136-164 (RNRRDSANYKTSSVANETNHSYTTRVDNK) is disordered. Over residues 143–164 (NYKTSSVANETNHSYTTRVDNK) the composition is skewed to polar residues.

The protein belongs to the UPF0478 family.

It is found in the cell membrane. This chain is UPF0478 protein SSP1024, found in Staphylococcus saprophyticus subsp. saprophyticus (strain ATCC 15305 / DSM 20229 / NCIMB 8711 / NCTC 7292 / S-41).